Here is a 63-residue protein sequence, read N- to C-terminus: Serine protease inhibitor 3 (63 aa).

The first 23 residues, 1–23 (MAKLLAVFLVLLIAALVCEQALA), serve as a signal peptide directing secretion. Intrachain disulfides connect cysteine 24–cysteine 39, cysteine 34–cysteine 52, and cysteine 37–cysteine 47. Residues 24–55 (CTPGSRKYDGCNWCTCSSGGAWICTLKYCPPS) form the Pacifastin domain.

This sequence belongs to the protease inhibitor I19 family. Expressed in hemolymph, ovaries, testes and fat body of adults but are absent in the gut. Also present in larval hemolymph and fat body.

Its subcellular location is the secreted. In vitro, active against alpha-chymotrypsin. The protein is Serine protease inhibitor 3 of Schistocerca gregaria (Desert locust).